The chain runs to 304 residues: RING-H2 finger protein ATL2 (304 aa).

The helical transmembrane segment at 30–50 threads the bilayer; the sequence is IMLSAIVILFFVVILMVFLHL. Residues 119–161 form an RING-type; atypical zinc finger; sequence CAVCLSEFEESETGRVLPNCQHTFHVDCIDMWFHSHSTCPLCR. The segment at 194-304 is disordered; that stretch reads EPSSSSGLTD…DIERGGEESR (111 aa). A compositionally biased stretch (basic and acidic residues) spans 227–244; sequence VPRRTFSEFEDELTRRDS. Positions 283–293 are enriched in polar residues; it reads PTLSCRIQMTE. Over residues 295 to 304 the composition is skewed to basic and acidic residues; that stretch reads DIERGGEESR.

Belongs to the RING-type zinc finger family. ATL subfamily. Preferentially expressed around the apical meristem region.

It localises to the membrane. It carries out the reaction S-ubiquitinyl-[E2 ubiquitin-conjugating enzyme]-L-cysteine + [acceptor protein]-L-lysine = [E2 ubiquitin-conjugating enzyme]-L-cysteine + N(6)-ubiquitinyl-[acceptor protein]-L-lysine.. It functions in the pathway protein modification; protein ubiquitination. Functionally, may be involved in the early steps of the plant defense signaling pathway. This chain is RING-H2 finger protein ATL2 (ATL2), found in Arabidopsis thaliana (Mouse-ear cress).